A 389-amino-acid polypeptide reads, in one-letter code: Chalcone synthase 3 (389 aa).

Cys164 is a catalytic residue.

Belongs to the thiolase-like superfamily. Chalcone/stilbene synthases family.

The enzyme catalyses (E)-4-coumaroyl-CoA + 3 malonyl-CoA + 3 H(+) = 2',4,4',6'-tetrahydroxychalcone + 3 CO2 + 4 CoA. It participates in secondary metabolite biosynthesis; flavonoid biosynthesis. Functionally, the primary product of this enzyme is 4,2',4',6'-tetrahydroxychalcone (also termed naringenin-chalcone or chalcone) which can under specific conditions spontaneously isomerize into naringenin. The protein is Chalcone synthase 3 (CHS3) of Trifolium subterraneum (Subterranean clover).